We begin with the raw amino-acid sequence, 290 residues long: ATP synthase gamma chain (290 aa).

It belongs to the ATPase gamma chain family. F-type ATPases have 2 components, CF(1) - the catalytic core - and CF(0) - the membrane proton channel. CF(1) has five subunits: alpha(3), beta(3), gamma(1), delta(1), epsilon(1). CF(0) has three main subunits: a, b and c.

It is found in the cell inner membrane. Functionally, produces ATP from ADP in the presence of a proton gradient across the membrane. The gamma chain is believed to be important in regulating ATPase activity and the flow of protons through the CF(0) complex. This chain is ATP synthase gamma chain, found in Amoebophilus asiaticus (strain 5a2).